We begin with the raw amino-acid sequence, 334 residues long: BRISC and BRCA1-A complex member 1 (334 aa).

N-acetylmethionine is present on Met-1. The segment at 1–79 is disordered; that stretch reads MEVAEANSPT…VPGAVPKPWQ (79 aa). Ser-8 bears the Phosphoserine mark. A compositionally biased stretch (acidic residues) spans 10 to 25; that stretch reads TEEEEEEEEEEGEEPI. A phosphoserine mark is found at Ser-34 and Ser-54. The segment covering 59 to 68 has biased composition (low complexity); that stretch reads EAATADDGAA. The interval 100–303 is VWFA-like; it reads VIICLDLSEE…LELHNCVAKL (204 aa).

Belongs to the BABAM1 family. As to quaternary structure, component of the ARISC complex, at least composed of UIMC1/RAP80, ABRAXAS1, BRCC3/BRCC36, BABAM2 and BABAM1/NBA1. Component of the BRCA1-A complex, at least composed of BRCA1, BARD1, UIMC1/RAP80, ABRAXAS1, BRCC3/BRCC36, BABAM2 and BABAM1/NBA1. In the BRCA1-A complex, interacts directly with ABRAXAS1 and BABAM2. Component of the BRISC complex, at least composed of ABRAXAS2, BRCC3/BRCC36, BABAM2 and BABAM1/NBA1. Identified in a complex with SHMT2 and the other subunits of the BRISC complex.

The protein resides in the cytoplasm. Its subcellular location is the nucleus. Functionally, component of the BRCA1-A complex, a complex that specifically recognizes 'Lys-63'-linked ubiquitinated histones H2A and H2AX at DNA lesions sites, leading to target the BRCA1-BARD1 heterodimer to sites of DNA damage at double-strand breaks (DSBs). The BRCA1-A complex also possesses deubiquitinase activity that specifically removes 'Lys-63'-linked ubiquitin on histones H2A and H2AX. In the BRCA1-A complex, it is required for the complex integrity and its localization at DSBs. Component of the BRISC complex, a multiprotein complex that specifically cleaves 'Lys-63'-linked ubiquitin in various substrates. In these 2 complexes, it is probably required to maintain the stability of BABAM2 and help the 'Lys-63'-linked deubiquitinase activity mediated by BRCC3/BRCC36 component. The BRISC complex is required for normal mitotic spindle assembly and microtubule attachment to kinetochores via its role in deubiquitinating NUMA1. Plays a role in interferon signaling via its role in the deubiquitination of the interferon receptor IFNAR1; deubiquitination increases IFNAR1 activity by enhancing its stability and cell surface expression. Down-regulates the response to bacterial lipopolysaccharide (LPS) via its role in IFNAR1 deubiquitination. The chain is BRISC and BRCA1-A complex member 1 (Babam1) from Rattus norvegicus (Rat).